The primary structure comprises 249 residues: Triosephosphate isomerase (249 aa).

Residue 9 to 11 (NWK) participates in substrate binding. Residue H94 is the Electrophile of the active site. Catalysis depends on E166, which acts as the Proton acceptor. Substrate contacts are provided by residues G172, S212, and 233–234 (GG).

It belongs to the triosephosphate isomerase family. Homodimer.

The protein localises to the cytoplasm. The enzyme catalyses D-glyceraldehyde 3-phosphate = dihydroxyacetone phosphate. Its pathway is carbohydrate biosynthesis; gluconeogenesis. It functions in the pathway carbohydrate degradation; glycolysis; D-glyceraldehyde 3-phosphate from glycerone phosphate: step 1/1. In terms of biological role, involved in the gluconeogenesis. Catalyzes stereospecifically the conversion of dihydroxyacetone phosphate (DHAP) to D-glyceraldehyde-3-phosphate (G3P). The protein is Triosephosphate isomerase of Treponema pallidum (strain Nichols).